The following is an 89-amino-acid chain: uncharacterized protein (89 aa).

This is an uncharacterized protein from Bacillus subtilis (strain 168).